The chain runs to 457 residues: Argininosuccinate lyase (457 aa).

Belongs to the lyase 1 family. Argininosuccinate lyase subfamily.

It is found in the cytoplasm. The catalysed reaction is 2-(N(omega)-L-arginino)succinate = fumarate + L-arginine. The protein operates within amino-acid biosynthesis; L-arginine biosynthesis; L-arginine from L-ornithine and carbamoyl phosphate: step 3/3. The polypeptide is Argininosuccinate lyase (Pectobacterium atrosepticum (strain SCRI 1043 / ATCC BAA-672) (Erwinia carotovora subsp. atroseptica)).